A 1055-amino-acid polypeptide reads, in one-letter code: MALKLTSPPSVFSQSRRLSSSSLIPIRSKSTFTGFRSRTGVYLSKTTALQSSTKLSVAAESPAATIATDDWGKVSAVLFDMDGVLCNSEDLSRRAAVDVFTEMGVEVTVDDFVPFMGTGEAKFLGGVASVKEVKGFDPDAAKERFFEIYLDKYAKPESGIGFPGALELVTECKNKGLKVAVASSADRIKVDANLKAAGLSLTMFDAIVSADAFENLKPAPDIFLAAAKILGVPTSECVVIEDALAGVQAAQAANMRCIAVKTTLSEAILKDAGPSMIRDDIGNISINDILTGGSDSTRNSTAMLEENTVSDKTSANGFQGSRRDILRYGSLGIALSCVYFAATNWKAMQYASPKALWNALVGAKSPSFTQNQGEGRVQQFVDYIADLESKQTATTVPEFPSKLDWLNTAPLQFRRDLKGKVVILDFWTYCCINCMHVLPDLEFLEKKYKDMPFTVVGVHSAKFDNEKDLDAIRNAVLRYDISHPVVNDGDMYMWRELGINSWPTFAVVSPNGKVIAQIAGEGHRKDLDDVVAAALTYYGGKNVLDSTPLPTRLEKDNDPRLATSPLKFPGKLAIDTLNNRLFISDSNHNRIIVTDLEGNFIVQIGSSGEEGFQDGSFEDAAFNRPQGLAYNAKKNLLYVADTENHALREIDFVNERVQTLAGNGTKGSDYQGGRKGTKQLLNSPWDVCFEPVNEKVYIAMAGQHQIWEYSVLDGITRVFSGNGYERNLNGSTPQTTSFAQPSGISLGPDLKEAYIADSESSSIRALDLQTGGSRLLAGGDPYFSENLFKFGDNDGVGAEVLLQHPLGVLCANDGQIYLTDSYNHKIKKLDPVTKRVVTLAGTGKAGFKDGKVKGAQLSEPAGLAITENGRLFVADTNNSLIRYIDLNKGEDSEILTLELKGVQPPTPKAKSLKRLRKRASADTKIVKVDSVTSREGDLNLKISLPDGYHFSKEARSKFVVDVEPENAVAIDPTEGTLSPEGSTMLHFIQSSTSASVGKISCKVYYCKEDEVCLYQSVQFEVPFKVESELSASPTITFTVTPRAPDAGGLQLQGTR.

The N-terminal 56 residues, 1 to 56, are a transit peptide targeting the chloroplast; sequence MALKLTSPPSVFSQSRRLSSSSLIPIRSKSTFTGFRSRTGVYLSKTTALQSSTKLS. Val-57 bears the N-acetylvaline mark. Over 59-327 the chain is Stromal; the sequence is AESPAATIAT…FQGSRRDILR (269 aa). The active-site Nucleophile is the Asp-80. Residues Asp-80 and Asp-82 each contribute to the Mg(2+) site. Asp-80 is a binding site for substrate. The active-site Proton donor is Asp-82. Residues Glu-89, 118-122, 141-144, and 183-189 contribute to the substrate site; these read TGEAK, AKER, and SSADRIK. Asp-242 is a Mg(2+) binding site. Residues 328–345 form a helical membrane-spanning segment; it reads YGSLGIALSCVYFAATNW. The Lumenal segment spans residues 346-1055; the sequence is KAMQYASPKA…AGGLQLQGTR (710 aa). A Thioredoxin domain is found at 359-536; it reads ALVGAKSPSF…LDDVVAAALT (178 aa). An intrachain disulfide couples Cys-431 to Cys-434. NHL repeat units follow at residues 565-597, 611-647, 673-712, 802-832, and 854-887; these read PLKFPGKLAIDTLNNRLFISDSNHNRIIVTDLE, GFQDGSFEDAAFNRPQGLAYNAKKNLLYVADTENHAL, GRKGTKQLLNSPWDVCFEPVNEKVYIAMAGQHQIWEYSVL, LQHPLGVLCANDGQIYLTDSYNHKIKKLDPV, and GAQLSEPAGLAITENGRLFVADTNNSLIRYIDLN.

The protein in the N-terminal section; belongs to the HAD-like hydrolase superfamily. This sequence in the C-terminal section; belongs to the thioredoxin family. It depends on Mg(2+) as a cofactor.

Its subcellular location is the plastid. The protein localises to the chloroplast thylakoid membrane. Its function is as follows. Required to maintain light harvesting efficiency, especially during nonphotochemical quenching (NPQ) recovery, via the regulation of chlorophyll excited-state lifetime probably by preventing the formation of a slowly reversible form of antenna quenching. The polypeptide is Protein SUPPRESSOR OF QUENCHING 1, chloroplastic (Arabidopsis thaliana (Mouse-ear cress)).